Here is a 144-residue protein sequence, read N- to C-terminus: Mediator of RNA polymerase II transcription subunit 9 (144 aa).

A coiled-coil region spans residues 85–143; sequence QDCNHKIFELQKRFESAREQIRQLPGIDFNKEEQQQRLELLRNQLKLKQQLIRKYKDTE.

The protein belongs to the Mediator complex subunit 9 family. Component of the Mediator complex.

It localises to the nucleus. Functionally, component of the Mediator complex, a coactivator involved in the regulated transcription of nearly all RNA polymerase II-dependent genes. Mediator functions as a bridge to convey information from gene-specific regulatory proteins to the basal RNA polymerase II transcription machinery. Mediator is recruited to promoters by direct interactions with regulatory proteins and serves as a scaffold for the assembly of a functional preinitiation complex with RNA polymerase II and the general transcription factors. The polypeptide is Mediator of RNA polymerase II transcription subunit 9 (MED9) (Drosophila melanogaster (Fruit fly)).